A 250-amino-acid polypeptide reads, in one-letter code: Cellulose biosynthesis protein BcsQ (250 aa).

9–16 is an ATP binding site; that stretch reads VRGGVGTT.

It belongs to the BcsQ family.

The protein localises to the cytoplasm. In terms of biological role, essential for cellulose biosynthesis, shown for strain 1094, a commensal, natural cellulose producer. Also shown in strain W3110 which has a restored reading frame (TAG stop codon to TTG for amino acid 6, called strain AR3110), this protein. May play a role in subcellular localization of an active cellulose biosynthesis apparatus at the bacterial cell pole. The combination of cellulose and the curli fiber network confer cohesion, elasticity and tissue-like properties to colonies. The protein is Cellulose biosynthesis protein BcsQ of Escherichia coli (strain K12).